Consider the following 394-residue polypeptide: MNGRFGKFGGQYVPETLMNAINELEVEFNKAINDEKFMMEYKYYLEKYVGRETPLYFAENMTKNLGGAKIYLKREDLNHTGSHKLNNALGQVLLAKRMGKKRVIAETGAGQHGVATATAAALFGLECEVFMGAEDVERQALNVFRMKILGAKVNSVKSGTNTLKDAINAAMRDWVTNIDNTYYVIGSVMGPHPYPTIVKDFQKIIGEEARKQILKAEGRLPDYVVACVGGGSNSMGIFYPFIKDEGVKLIGVEAAGLGIDTPMHAATLTKGSVGIIHGMMTYVLQDEDGQITPAYSVSAGLDYPGVGPQHSYLKEKERASYEAVTDKEALKAFLYLSEKEGIIPALESSHAVAYAMKLAPSLSKDEIVIINLSGRGDKDVNTVMKNMEENKNGK.

The residue at position 84 (K84) is an N6-(pyridoxal phosphate)lysine.

This sequence belongs to the TrpB family. Tetramer of two alpha and two beta chains. Requires pyridoxal 5'-phosphate as cofactor.

The enzyme catalyses (1S,2R)-1-C-(indol-3-yl)glycerol 3-phosphate + L-serine = D-glyceraldehyde 3-phosphate + L-tryptophan + H2O. It participates in amino-acid biosynthesis; L-tryptophan biosynthesis; L-tryptophan from chorismate: step 5/5. The beta subunit is responsible for the synthesis of L-tryptophan from indole and L-serine. In Clostridium acetobutylicum (strain ATCC 824 / DSM 792 / JCM 1419 / IAM 19013 / LMG 5710 / NBRC 13948 / NRRL B-527 / VKM B-1787 / 2291 / W), this protein is Tryptophan synthase beta chain.